The primary structure comprises 729 residues: Fatty acid oxidation complex subunit alpha (729 aa).

The segment at 1–189 (MLYKGDTLYL…KIGLVDGVVK (189 aa)) is enoyl-CoA hydratase/isomerase. Aspartate 296 lines the substrate pocket. Positions 311 to 729 (ETPKQAAVLG…ARPVGSLKTA (419 aa)) are 3-hydroxyacyl-CoA dehydrogenase. NAD(+) contacts are provided by residues methionine 324, aspartate 343, 400–402 (VVE), lysine 407, and serine 429. Residue histidine 450 is the For 3-hydroxyacyl-CoA dehydrogenase activity of the active site. Asparagine 453 is an NAD(+) binding site. Substrate-binding residues include asparagine 500 and tyrosine 660. Residues 708–729 (RHNEPYYPPVEPARPVGSLKTA) form a disordered region.

It in the N-terminal section; belongs to the enoyl-CoA hydratase/isomerase family. The protein in the C-terminal section; belongs to the 3-hydroxyacyl-CoA dehydrogenase family. As to quaternary structure, heterotetramer of two alpha chains (FadB) and two beta chains (FadA).

It catalyses the reaction a (3S)-3-hydroxyacyl-CoA + NAD(+) = a 3-oxoacyl-CoA + NADH + H(+). The enzyme catalyses a (3S)-3-hydroxyacyl-CoA = a (2E)-enoyl-CoA + H2O. It carries out the reaction a 4-saturated-(3S)-3-hydroxyacyl-CoA = a (3E)-enoyl-CoA + H2O. The catalysed reaction is (3S)-3-hydroxybutanoyl-CoA = (3R)-3-hydroxybutanoyl-CoA. It catalyses the reaction a (3Z)-enoyl-CoA = a 4-saturated (2E)-enoyl-CoA. The enzyme catalyses a (3E)-enoyl-CoA = a 4-saturated (2E)-enoyl-CoA. Its pathway is lipid metabolism; fatty acid beta-oxidation. Its function is as follows. Involved in the aerobic and anaerobic degradation of long-chain fatty acids via beta-oxidation cycle. Catalyzes the formation of 3-oxoacyl-CoA from enoyl-CoA via L-3-hydroxyacyl-CoA. It can also use D-3-hydroxyacyl-CoA and cis-3-enoyl-CoA as substrate. This Salmonella gallinarum (strain 287/91 / NCTC 13346) protein is Fatty acid oxidation complex subunit alpha.